Consider the following 303-residue polypeptide: Acetyl-coenzyme A carboxylase carboxyl transferase subunit beta (303 aa).

Positions 29 to 298 (LWVKCPETGQ…ATPAPASAAA (270 aa)) constitute a CoA carboxyltransferase N-terminal domain.

The protein belongs to the AccD/PCCB family. As to quaternary structure, acetyl-CoA carboxylase is a heterohexamer composed of biotin carboxyl carrier protein (AccB), biotin carboxylase (AccC) and two subunits each of ACCase subunit alpha (AccA) and ACCase subunit beta (AccD).

It is found in the cytoplasm. It catalyses the reaction N(6)-carboxybiotinyl-L-lysyl-[protein] + acetyl-CoA = N(6)-biotinyl-L-lysyl-[protein] + malonyl-CoA. The protein operates within lipid metabolism; malonyl-CoA biosynthesis; malonyl-CoA from acetyl-CoA: step 1/1. Its function is as follows. Component of the acetyl coenzyme A carboxylase (ACC) complex. Biotin carboxylase (BC) catalyzes the carboxylation of biotin on its carrier protein (BCCP) and then the CO(2) group is transferred by the transcarboxylase to acetyl-CoA to form malonyl-CoA. This Methylobacterium sp. (strain 4-46) protein is Acetyl-coenzyme A carboxylase carboxyl transferase subunit beta.